The sequence spans 95 residues: uncharacterized protein (95 aa).

This is an uncharacterized protein from Escherichia coli O6:H1 (strain CFT073 / ATCC 700928 / UPEC).